The following is a 176-amino-acid chain: Adenine phosphoribosyltransferase (176 aa).

This sequence belongs to the purine/pyrimidine phosphoribosyltransferase family. As to quaternary structure, homodimer.

Its subcellular location is the cytoplasm. The enzyme catalyses AMP + diphosphate = 5-phospho-alpha-D-ribose 1-diphosphate + adenine. It functions in the pathway purine metabolism; AMP biosynthesis via salvage pathway; AMP from adenine: step 1/1. Functionally, catalyzes a salvage reaction resulting in the formation of AMP, that is energically less costly than de novo synthesis. The sequence is that of Adenine phosphoribosyltransferase from Leuconostoc mesenteroides subsp. mesenteroides (strain ATCC 8293 / DSM 20343 / BCRC 11652 / CCM 1803 / JCM 6124 / NCDO 523 / NBRC 100496 / NCIMB 8023 / NCTC 12954 / NRRL B-1118 / 37Y).